The chain runs to 553 residues: Coiled-coil domain-containing protein 22 homolog (553 aa).

Residues Asp-236 to Leu-264 form a disordered region. Coiled-coil stretches lie at residues Ile-261–Ala-286, Glu-314–Ala-407, and Asn-498–Pro-549.

It belongs to the CCDC22 family.

The chain is Coiled-coil domain-containing protein 22 homolog from Drosophila erecta (Fruit fly).